The primary structure comprises 445 residues: Histidinol dehydrogenase (445 aa).

Residues Tyr-138, Gln-199, and Asn-222 each coordinate NAD(+). Positions 245, 267, and 270 each coordinate substrate. Residues Gln-267 and His-270 each coordinate Zn(2+). Active-site proton acceptor residues include Glu-335 and His-336. His-336, Asp-369, Glu-423, and His-428 together coordinate substrate. Asp-369 contacts Zn(2+). His-428 contacts Zn(2+).

This sequence belongs to the histidinol dehydrogenase family. Zn(2+) serves as cofactor.

It catalyses the reaction L-histidinol + 2 NAD(+) + H2O = L-histidine + 2 NADH + 3 H(+). Its pathway is amino-acid biosynthesis; L-histidine biosynthesis; L-histidine from 5-phospho-alpha-D-ribose 1-diphosphate: step 9/9. Functionally, catalyzes the sequential NAD-dependent oxidations of L-histidinol to L-histidinaldehyde and then to L-histidine. This chain is Histidinol dehydrogenase, found in Burkholderia mallei (strain ATCC 23344).